Reading from the N-terminus, the 132-residue chain is Small ribosomal subunit protein uS8 (132 aa).

This sequence belongs to the universal ribosomal protein uS8 family. Part of the 30S ribosomal subunit. Contacts proteins S5 and S12.

Its function is as follows. One of the primary rRNA binding proteins, it binds directly to 16S rRNA central domain where it helps coordinate assembly of the platform of the 30S subunit. The sequence is that of Small ribosomal subunit protein uS8 from Sinorhizobium medicae (strain WSM419) (Ensifer medicae).